Reading from the N-terminus, the 202-residue chain is Large ribosomal subunit protein eL13 (202 aa).

Belongs to the eukaryotic ribosomal protein eL13 family.

The protein is Large ribosomal subunit protein eL13 (RPL13) of Nicotiana tabacum (Common tobacco).